Reading from the N-terminus, the 695-residue chain is L-type lectin-domain containing receptor kinase S.7 (695 aa).

Residues 1-23 (MPPRCRRLPLLFILLLAVRPLSA) form the signal peptide. The Extracellular portion of the chain corresponds to 24–331 (AAASSIAAAP…NHRRRHLFYK (308 aa)). Residues 37–276 (YRRISWASNL…VERWTFRTFG (240 aa)) are legume-lectin like. 2 N-linked (GlcNAc...) asparagine glycosylation sites follow: N45 and N279. Pro residues predominate over residues 286–320 (PTKYIGPMPPNNQPLPPPPSPSPSPPPPSPPPPPH). The tract at residues 286-323 (PTKYIGPMPPNNQPLPPPPSPSPSPPPPSPPPPPHPNH) is disordered. Residues 332–352 (VLGGVLGGMVLLGLVVVGSAV) form a helical membrane-spanning segment. Over 353-695 (LLGRSVRRKN…TANTAFFSCR (343 aa)) the chain is Cytoplasmic. T376 is modified (phosphothreonine). S378 carries the post-translational modification Phosphoserine. Residues T386 and T403 each carry the phosphothreonine modification. The Protein kinase domain occupies 389–661 (FDSGNVIGVG…SMLDGTAPLI (273 aa)). ATP is bound by residues 395 to 403 (IGVGGSGAT) and K418. D514 functions as the Proton acceptor in the catalytic mechanism. T657 carries the post-translational modification Phosphothreonine.

It in the N-terminal section; belongs to the leguminous lectin family. This sequence in the C-terminal section; belongs to the protein kinase superfamily. Ser/Thr protein kinase family. In terms of assembly, interacts with INP1. Interaction with INP1 is required for DAF1 polar localization at the future aperture sites in tetrads. Autophosphorylated at Thr-376; Ser-378; Thr-386; Thr-403 and Thr-657. Expressed in roots, leaves, lemma, palea, pistil and anthers.

Its subcellular location is the cell membrane. The protein resides in the cytoplasm. It localises to the cytosol. The enzyme catalyses L-seryl-[protein] + ATP = O-phospho-L-seryl-[protein] + ADP + H(+). It catalyses the reaction L-threonyl-[protein] + ATP = O-phospho-L-threonyl-[protein] + ADP + H(+). Legume-lectin receptor-like kinase required for normal pollen development and male fertility. Regulates pollen exine assembly and aperture development. Plays a critical role in annulus formation, and may participate in the formation of the fibrillar-granular layer underneath the operculum. May function by regulating the expression of genes involved in pollen exine development. Kinase activity is required for its function in pollen development. This is L-type lectin-domain containing receptor kinase S.7 from Oryza sativa subsp. japonica (Rice).